The following is a 346-amino-acid chain: Cytosolic sulfotransferase 17 (346 aa).

Position 89-94 (89-94 (KTGTTW)) interacts with 3'-phosphoadenylyl sulfate. His151 serves as the catalytic Proton acceptor. 3'-phosphoadenylyl sulfate is bound by residues Arg173, Ser181, Tyr239, and 309 to 311 (RKG).

It belongs to the sulfotransferase 1 family. Highly expressed in roots, stems and mature leaves. Low expression in young leaves and flowers. Barely detected in siliques.

The protein resides in the cytoplasm. The catalysed reaction is an aliphatic (Z)-desulfo-glucosinolate + 3'-phosphoadenylyl sulfate = a (Z)-omega-(methylsulfanyl)-N-sulfo-alkylhydroximate S-glucoside + adenosine 3',5'-bisphosphate + H(+). Its activity is regulated as follows. Inhibited by phosphoadenosine 5'-phosphate (PAP). Functionally, sulfotransferase that utilizes 3'-phospho-5'-adenylyl sulfate (PAPS) as sulfonate donor to catalyze the sulfate conjugation of desulfo-glucosinolates (dsGSs), the final step in the biosynthesis of the glucosinolate core structure. Substrate preference is desulfo-benzyl glucosinolate &gt; desulfo-6-methylthiohexyl glucosinolate. Increased specific activity with increasing chain length of desulfo-glucosinolate derived from methionine. Preferred substrate is desulfo-8-methylthiooctyl glucosinolate. The sequence is that of Cytosolic sulfotransferase 17 (SOT17) from Arabidopsis thaliana (Mouse-ear cress).